Reading from the N-terminus, the 434-residue chain is Probable glycine dehydrogenase (decarboxylating) subunit 1 (434 aa).

Belongs to the GcvP family. N-terminal subunit subfamily. The glycine cleavage system is composed of four proteins: P, T, L and H. In this organism, the P 'protein' is a heterodimer of two subunits.

It carries out the reaction N(6)-[(R)-lipoyl]-L-lysyl-[glycine-cleavage complex H protein] + glycine + H(+) = N(6)-[(R)-S(8)-aminomethyldihydrolipoyl]-L-lysyl-[glycine-cleavage complex H protein] + CO2. Functionally, the glycine cleavage system catalyzes the degradation of glycine. The P protein binds the alpha-amino group of glycine through its pyridoxal phosphate cofactor; CO(2) is released and the remaining methylamine moiety is then transferred to the lipoamide cofactor of the H protein. The chain is Probable glycine dehydrogenase (decarboxylating) subunit 1 from Thermoplasma volcanium (strain ATCC 51530 / DSM 4299 / JCM 9571 / NBRC 15438 / GSS1).